The primary structure comprises 227 residues: DNA packaging ATPase P9 (227 aa).

16–23 (GKTGTGKT) provides a ligand contact to ATP.

In terms of assembly, heterodimer of P6 and P9; further multimerizes as hexamers of heterodimers. Part of the dodecameric portal complex that is composed of the packaging efficiency factor P6, the DNA packaging ATPase P9, and the internal heterododecamer P20/P22 which spans the virion inner membrane.

The protein localises to the virion. In terms of biological role, together with the packaging efficiency factor P6, forms the external part of the portal vertex that is embeded in the capsid and which plays critical roles in genome packaging and genome ejection. Both proteins multimerize as a single ring-shaped heterdodecamer arranged around a central channel. This chain is DNA packaging ATPase P9 (IX), found in Enterobacteria phage PRD1 (Bacteriophage PRD1).